The chain runs to 227 residues: Cytochrome c oxidase subunit 2 (227 aa).

The Mitochondrial intermembrane portion of the chain corresponds to 1–14 (MAYPFQLGLQDATS). The chain crosses the membrane as a helical span at residues 15–45 (PIMEELLHFHDHTLMIVFLISSLVLYIISSM). The Mitochondrial matrix portion of the chain corresponds to 46–59 (LTTKLTHTSTMDAQ). A helical membrane pass occupies residues 60–87 (EVETVWTILPAIILVLIALPSLRILYMM). Over 88–227 (DETNNPSLTV…YFETWSALMV (140 aa)) the chain is Mitochondrial intermembrane. Histidine 161, cysteine 196, glutamate 198, cysteine 200, histidine 204, and methionine 207 together coordinate Cu cation. Glutamate 198 contacts Mg(2+). Tyrosine 218 bears the Phosphotyrosine mark.

The protein belongs to the cytochrome c oxidase subunit 2 family. As to quaternary structure, component of the cytochrome c oxidase (complex IV, CIV), a multisubunit enzyme composed of 14 subunits. The complex is composed of a catalytic core of 3 subunits MT-CO1, MT-CO2 and MT-CO3, encoded in the mitochondrial DNA, and 11 supernumerary subunits COX4I, COX5A, COX5B, COX6A, COX6B, COX6C, COX7A, COX7B, COX7C, COX8 and NDUFA4, which are encoded in the nuclear genome. The complex exists as a monomer or a dimer and forms supercomplexes (SCs) in the inner mitochondrial membrane with NADH-ubiquinone oxidoreductase (complex I, CI) and ubiquinol-cytochrome c oxidoreductase (cytochrome b-c1 complex, complex III, CIII), resulting in different assemblies (supercomplex SCI(1)III(2)IV(1) and megacomplex MCI(2)III(2)IV(2)). Found in a complex with TMEM177, COA6, COX18, COX20, SCO1 and SCO2. Interacts with TMEM177 in a COX20-dependent manner. Interacts with COX20. Interacts with COX16. The cofactor is Cu cation.

It localises to the mitochondrion inner membrane. It catalyses the reaction 4 Fe(II)-[cytochrome c] + O2 + 8 H(+)(in) = 4 Fe(III)-[cytochrome c] + 2 H2O + 4 H(+)(out). In terms of biological role, component of the cytochrome c oxidase, the last enzyme in the mitochondrial electron transport chain which drives oxidative phosphorylation. The respiratory chain contains 3 multisubunit complexes succinate dehydrogenase (complex II, CII), ubiquinol-cytochrome c oxidoreductase (cytochrome b-c1 complex, complex III, CIII) and cytochrome c oxidase (complex IV, CIV), that cooperate to transfer electrons derived from NADH and succinate to molecular oxygen, creating an electrochemical gradient over the inner membrane that drives transmembrane transport and the ATP synthase. Cytochrome c oxidase is the component of the respiratory chain that catalyzes the reduction of oxygen to water. Electrons originating from reduced cytochrome c in the intermembrane space (IMS) are transferred via the dinuclear copper A center (CU(A)) of subunit 2 and heme A of subunit 1 to the active site in subunit 1, a binuclear center (BNC) formed by heme A3 and copper B (CU(B)). The BNC reduces molecular oxygen to 2 water molecules using 4 electrons from cytochrome c in the IMS and 4 protons from the mitochondrial matrix. This is Cytochrome c oxidase subunit 2 (MT-CO2) from Chrysocyon brachyurus (Maned wolf).